A 291-amino-acid polypeptide reads, in one-letter code: Glutamate racemase (291 aa).

Substrate is bound by residues 12–13 (DS) and 44–45 (YG). Catalysis depends on Cys-75, which acts as the Proton donor/acceptor. Substrate is bound at residue 76-77 (NT). The active-site Proton donor/acceptor is the Cys-187. 188–189 (TH) provides a ligand contact to substrate. Positions 234 to 247 (ATQAAGARAQMAPS) are enriched in low complexity. The interval 234 to 257 (ATQAAGARAQMAPSAPEPKEGTPD) is disordered.

It belongs to the aspartate/glutamate racemases family.

It catalyses the reaction L-glutamate = D-glutamate. Its pathway is cell wall biogenesis; peptidoglycan biosynthesis. In terms of biological role, provides the (R)-glutamate required for cell wall biosynthesis. The chain is Glutamate racemase from Koribacter versatilis (strain Ellin345).